A 348-amino-acid polypeptide reads, in one-letter code: Probable dual-specificity RNA methyltransferase RlmN (348 aa).

Glutamate 93 acts as the Proton acceptor in catalysis. The Radical SAM core domain maps to 99 to 333; sequence TEKRLTACLS…VSLRKSRGLD (235 aa). An intrachain disulfide couples cysteine 106 to cysteine 338. [4Fe-4S] cluster-binding residues include cysteine 113, cysteine 117, and cysteine 120. Residues 160 to 161, serine 190, 219 to 221, and asparagine 295 each bind S-adenosyl-L-methionine; these read GE and SLH. The active-site S-methylcysteine intermediate is cysteine 338.

It belongs to the radical SAM superfamily. RlmN family. The cofactor is [4Fe-4S] cluster.

It localises to the cytoplasm. The enzyme catalyses adenosine(2503) in 23S rRNA + 2 reduced [2Fe-2S]-[ferredoxin] + 2 S-adenosyl-L-methionine = 2-methyladenosine(2503) in 23S rRNA + 5'-deoxyadenosine + L-methionine + 2 oxidized [2Fe-2S]-[ferredoxin] + S-adenosyl-L-homocysteine. It carries out the reaction adenosine(37) in tRNA + 2 reduced [2Fe-2S]-[ferredoxin] + 2 S-adenosyl-L-methionine = 2-methyladenosine(37) in tRNA + 5'-deoxyadenosine + L-methionine + 2 oxidized [2Fe-2S]-[ferredoxin] + S-adenosyl-L-homocysteine. Its function is as follows. Specifically methylates position 2 of adenine 2503 in 23S rRNA and position 2 of adenine 37 in tRNAs. This is Probable dual-specificity RNA methyltransferase RlmN from Prochlorococcus marinus (strain AS9601).